The following is a 360-amino-acid chain: Photosystem II protein D1 (360 aa).

3 consecutive transmembrane segments (helical) span residues 29 to 46 (YVGW…TATT), 118 to 133 (QFLI…QWEL), and 142 to 156 (WICV…ARTA). Y126 serves as a coordination point for pheophytin a. The [CaMn4O5] cluster site is built by D170 and E189. A helical transmembrane segment spans residues 197 to 218 (FHMLGVAGVFGGSLFSAMHGSL). Position 198 (H198) interacts with chlorophyll a. Residues H215 and 264 to 265 (SF) contribute to the a quinone site. Position 215 (H215) interacts with Fe cation. H272 contacts Fe cation. Residues 274 to 288 (FLGAWPVIGIWFTAM) traverse the membrane as a helical segment. [CaMn4O5] cluster contacts are provided by H332, E333, D342, and A344. A propeptide spanning residues 345 to 360 (SGEQAPVALTAPAING) is cleaved from the precursor.

This sequence belongs to the reaction center PufL/M/PsbA/D family. In terms of assembly, PSII is composed of 1 copy each of membrane proteins PsbA, PsbB, PsbC, PsbD, PsbE, PsbF, PsbH, PsbI, PsbJ, PsbK, PsbL, PsbM, PsbT, PsbX, PsbY, PsbZ, Psb30/Ycf12, peripheral proteins PsbO, CyanoQ (PsbQ), PsbU, PsbV and a large number of cofactors. It forms dimeric complexes. It depends on The D1/D2 heterodimer binds P680, chlorophylls that are the primary electron donor of PSII, and subsequent electron acceptors. It shares a non-heme iron and each subunit binds pheophytin, quinone, additional chlorophylls, carotenoids and lipids. D1 provides most of the ligands for the Mn4-Ca-O5 cluster of the oxygen-evolving complex (OEC). There is also a Cl(-1) ion associated with D1 and D2, which is required for oxygen evolution. The PSII complex binds additional chlorophylls, carotenoids and specific lipids. as a cofactor. In terms of processing, tyr-161 forms a radical intermediate that is referred to as redox-active TyrZ, YZ or Y-Z. C-terminally processed by CtpA; processing is essential to allow assembly of the oxygen-evolving complex and thus photosynthetic growth.

It localises to the cellular thylakoid membrane. It catalyses the reaction 2 a plastoquinone + 4 hnu + 2 H2O = 2 a plastoquinol + O2. Functionally, photosystem II (PSII) is a light-driven water:plastoquinone oxidoreductase that uses light energy to abstract electrons from H(2)O, generating O(2) and a proton gradient subsequently used for ATP formation. It consists of a core antenna complex that captures photons, and an electron transfer chain that converts photonic excitation into a charge separation. The D1/D2 (PsbA/PsbD) reaction center heterodimer binds P680, the primary electron donor of PSII as well as several subsequent electron acceptors. The protein is Photosystem II protein D1 of Synechocystis sp. (strain PCC 6714) (Aphanocapsa sp. (strain PCC 6714)).